A 744-amino-acid polypeptide reads, in one-letter code: Deleted in azoospermia protein 1 (744 aa).

A compositionally biased stretch (polar residues) spans 1–10 (MSAANPETPN). Residues 1–27 (MSAANPETPNSTISREASTQSSSAAAS) form a disordered region. Over residues 11–27 (STISREASTQSSSAAAS) the composition is skewed to low complexity. Residues 40 to 115 (NTVFVGGIDA…KKLKLGPAIR (76 aa)) form the RRM 1 domain. The span at 163-175 (QHVQSAANPETPN) shows a compositional bias: polar residues. Residues 163–192 (QHVQSAANPETPNSTISREASTQSSSAAAS) are disordered. Over residues 176-192 (STISREASTQSSSAAAS) the composition is skewed to low complexity. The RRM 2 domain occupies 205–280 (NTVFVGGIDA…KKLKLGPAIR (76 aa)). A compositionally biased stretch (polar residues) spans 328–340 (QHVQSAANPETPN). Residues 328–357 (QHVQSAANPETPNSTISREASTQSSSAAAS) form a disordered region. Over residues 341–357 (STISREASTQSSSAAAS) the composition is skewed to low complexity. The 76-residue stretch at 370–445 (NTVFVGGIDA…KKLKLGPAIR (76 aa)) folds into the RRM 3 domain. 9 consecutive DAZ domains span residues 497–520 (AYSA…YNYQ), 521–544 (EYPT…YNYQ), 545–568 (PFPA…YNYQ), 569–592 (AFPA…YNYQ), 593–616 (PFPA…YNYQ), 617–640 (AFPA…YNYQ), 641–664 (AFPA…YNYQ), 665–688 (AFPA…YNYQ), and 689–712 (AFPA…YNYQ).

This sequence belongs to the RRM DAZ family. As to quaternary structure, forms a heterodimer with BOLL and DAZL. Interacts with PUM2, DAZAP1, DAZAP2, DZIP1 and DZIP3. In terms of tissue distribution, testis-specific. Expression restricted to premeiotic germ cells, particularly in spermatogonia (at protein level).

It is found in the cytoplasm. Its subcellular location is the nucleus. RNA-binding protein that plays an essential role in spermatogenesis. May act by binding to the 3'-UTR of mRNAs and regulating their translation. Promotes germ-cell progression to meiosis and formation of haploid germ cells. The polypeptide is Deleted in azoospermia protein 1 (DAZ1) (Homo sapiens (Human)).